The following is a 267-amino-acid chain: Undecaprenyl-diphosphatase (267 aa).

8 helical membrane passes run 5–25, 45–65, 82–102, 108–128, 143–163, 183–203, 213–233, and 243–263; these read TIVAAALGLLEGLTEFIPVSS, FEVLIQLGAIMAILGVYAGRL, ILAVLLAFLPAVVIGVLAHRI, FETPTLIAVMLIVGGVVLLFV, FPLPMALKIGFIQCLAMIPGV, AAEFSFFLSMPTMLGAFVYDL, AATGNIVIGFVCAFLAAVVVV, and YGYGLFAWWRIAVGVAVLLAL.

It belongs to the UppP family.

It localises to the cell inner membrane. The catalysed reaction is di-trans,octa-cis-undecaprenyl diphosphate + H2O = di-trans,octa-cis-undecaprenyl phosphate + phosphate + H(+). Its function is as follows. Catalyzes the dephosphorylation of undecaprenyl diphosphate (UPP). Confers resistance to bacitracin. The polypeptide is Undecaprenyl-diphosphatase (Paracoccus denitrificans (strain Pd 1222)).